The sequence spans 241 residues: Spheroidene monooxygenase (241 aa).

This sequence belongs to the CrtA family. The cofactor is heme.

The catalysed reaction is spheroidene + 4 reduced [2Fe-2S]-[ferredoxin] + 2 O2 + 4 H(+) = spheroiden-2-one + 4 oxidized [2Fe-2S]-[ferredoxin] + 3 H2O. It carries out the reaction spirilloxanthin + 4 reduced [2Fe-2S]-[ferredoxin] + 2 O2 + 4 H(+) = 2-oxospirilloxanthin + 4 oxidized [2Fe-2S]-[ferredoxin] + 3 H2O. It catalyses the reaction 2-oxospirilloxanthin + 4 reduced [2Fe-2S]-[ferredoxin] + 2 O2 + 4 H(+) = 2,2'-dioxospirilloxanthin + 4 oxidized [2Fe-2S]-[ferredoxin] + 3 H2O. The enzyme catalyses spheroidene + 2 reduced [2Fe-2S]-[ferredoxin] + O2 + 2 H(+) = 2-hydroxyspheroidene + 2 oxidized [2Fe-2S]-[ferredoxin] + H2O. The catalysed reaction is 2-hydroxyspheroidene + 2 reduced [2Fe-2S]-[ferredoxin] + O2 + 2 H(+) = 2,2-dihydroxyspheroidene + 2 oxidized [2Fe-2S]-[ferredoxin] + H2O. It carries out the reaction 2,2-dihydroxyspheroidene = spheroiden-2-one + H2O. It catalyses the reaction spirilloxanthin + 2 reduced [2Fe-2S]-[ferredoxin] + O2 + 2 H(+) = 2-hydroxyspirilloxanthin + 2 oxidized [2Fe-2S]-[ferredoxin] + H2O. The enzyme catalyses 2-hydroxyspirilloxanthin + 2 reduced [2Fe-2S]-[ferredoxin] + O2 + 2 H(+) = 2,2-dihydroxyspirilloxanthin + 2 oxidized [2Fe-2S]-[ferredoxin] + H2O. The catalysed reaction is 2,2-dihydroxyspirilloxanthin = 2-oxospirilloxanthin + H2O. It carries out the reaction 2-oxospirilloxanthin + 2 reduced [2Fe-2S]-[ferredoxin] + O2 + 2 H(+) = 2'-hydroxy-2-oxospirilloxanthin + 2 oxidized [2Fe-2S]-[ferredoxin] + H2O. It catalyses the reaction 2'-hydroxy-2-oxospirilloxanthin + 2 reduced [2Fe-2S]-[ferredoxin] + O2 + 2 H(+) = 2',2'-dihydroxy-2-oxospirilloxanthin + 2 oxidized [2Fe-2S]-[ferredoxin] + H2O. The enzyme catalyses 2',2'-dihydroxy-2-oxospirilloxanthin = 2,2'-dioxospirilloxanthin + H2O. It functions in the pathway carotenoid biosynthesis; spheroidene biosynthesis. Involved in the biosynthesis of the carotenoid spheroidene. Catalyzes the introduction of one keto group at the C-2 position of spheroidene. In vitro, can also catalyze the introduction of two keto groups at the C-2 and C-2' positions of spirilloxanthin, but spirilloxanthin biosynthesis pathway is not present in R.capsulatus. The chain is Spheroidene monooxygenase from Rhodobacter capsulatus (strain ATCC BAA-309 / NBRC 16581 / SB1003).